A 109-amino-acid polypeptide reads, in one-letter code: Guanylate cyclase activator 2B (109 aa).

An N-terminal signal peptide occupies residues 1-23 (MKVLALPVAVAAMLLVLAQNTQS). A propeptide spanning residues 24 to 94 (VYIQYEGFQV…NIFRALRSIS (71 aa)) is cleaved from the precursor. 3 cysteine pairs are disulfide-bonded: C65–C78, C98–C106, and C101–C109.

Belongs to the guanylin family. In terms of tissue distribution, small and large intestine and atria and ventricles of heart. Both uroguanylin and prouroguanylin are found in plasma.

Its subcellular location is the secreted. In terms of biological role, endogenous activator of intestinal guanylate cyclase. It stimulates this enzyme through the same receptor binding region as the heat-stable enterotoxins. May be a potent physiological regulator of intestinal fluid and electrolyte transport. May be an autocrine/paracrine regulator of intestinal salt and water transport. This Didelphis virginiana (North American opossum) protein is Guanylate cyclase activator 2B (GUCA2B).